Reading from the N-terminus, the 399-residue chain is Phosphoglycerate kinase (399 aa).

Residues Asp-22 to Asn-24, Arg-38, His-61 to Arg-64, Arg-119, and Arg-152 contribute to the substrate site. ATP is bound by residues Lys-205, Gly-296, Glu-327, and Gly-353 to Thr-356.

Belongs to the phosphoglycerate kinase family. Monomer.

It localises to the cytoplasm. It catalyses the reaction (2R)-3-phosphoglycerate + ATP = (2R)-3-phospho-glyceroyl phosphate + ADP. It functions in the pathway carbohydrate degradation; glycolysis; pyruvate from D-glyceraldehyde 3-phosphate: step 2/5. The sequence is that of Phosphoglycerate kinase from Nitratiruptor sp. (strain SB155-2).